Reading from the N-terminus, the 114-residue chain is Fructose-bisphosphate aldolase 2 (114 aa).

35-38 provides a ligand contact to dihydroxyacetone phosphate; sequence NIDT.

Belongs to the class II fructose-bisphosphate aldolase family. In terms of assembly, homodimer. Zn(2+) serves as cofactor.

The enzyme catalyses beta-D-fructose 1,6-bisphosphate = D-glyceraldehyde 3-phosphate + dihydroxyacetone phosphate. It functions in the pathway carbohydrate biosynthesis; Calvin cycle. It participates in carbohydrate degradation; glycolysis; D-glyceraldehyde 3-phosphate and glycerone phosphate from D-glucose: step 4/4. Its function is as follows. Catalyzes the aldol condensation of dihydroxyacetone phosphate (DHAP or glycerone-phosphate) with glyceraldehyde 3-phosphate (G3P) to form fructose 1,6-bisphosphate (FBP) in gluconeogenesis and the reverse reaction in glycolysis. The protein is Fructose-bisphosphate aldolase 2 (cbbA) of Rhodobacter capsulatus (Rhodopseudomonas capsulata).